The sequence spans 430 residues: Tol-Pal system protein TolB (430 aa).

The N-terminal stretch at 1 to 21 (MKQALRVAFGFLILWASVLHA) is a signal peptide.

Belongs to the TolB family. In terms of assembly, the Tol-Pal system is composed of five core proteins: the inner membrane proteins TolA, TolQ and TolR, the periplasmic protein TolB and the outer membrane protein Pal. They form a network linking the inner and outer membranes and the peptidoglycan layer.

The protein resides in the periplasm. Functionally, part of the Tol-Pal system, which plays a role in outer membrane invagination during cell division and is important for maintaining outer membrane integrity. TolB occupies a key intermediary position in the Tol-Pal system because it communicates directly with both membrane-embedded components, Pal in the outer membrane and TolA in the inner membrane. This chain is Tol-Pal system protein TolB, found in Escherichia coli O8 (strain IAI1).